The chain runs to 621 residues: Chaperone protein HscA homolog (621 aa).

This sequence belongs to the heat shock protein 70 family.

Chaperone involved in the maturation of iron-sulfur cluster-containing proteins. Has a low intrinsic ATPase activity which is markedly stimulated by HscB. The polypeptide is Chaperone protein HscA homolog (Ralstonia nicotianae (strain ATCC BAA-1114 / GMI1000) (Ralstonia solanacearum)).